The following is a 2032-amino-acid chain: Cytoskeleton-associated protein 5 (2032 aa).

TOG regions lie at residues 1 to 223 (MGDD…KLPT) and 268 to 502 (YELL…LIHG). Lysine 48 is subject to N6-acetyllysine. 3 HEAT repeats span residues 159 to 197 (IILLKPIIKVLPKLFESREKAVRDEAKLIAVEIYRWIRD), 356 to 394 (GQYAGHVVPTILEKFKEKKPQVVQALQEAIDAIFLTTTL), and 434 to 472 (KSLLKPFCAALLKHINDSAPEVRDAAFEALGTALKVVGE). A disordered region spans residues 516–579 (PLPGRTAASG…GTKNKKGLET (64 aa)). The span at 543 to 554 (LKKAPAAKAGGP) shows a compositional bias: low complexity. Residues 588–817 (SIEVCEEKAS…EFEKMQGQSP (230 aa)) form a TOG 3 region. The stretch at 750 to 788 (GLNVKAFISNVKTALAATNPAVRTAAITLLGVMYLYVGP) is one HEAT 4 repeat. Positions 811–851 (KMQGQSPPAPTRGISKHSTSGTDEGEDGDEPDDGSNDVVDL) are disordered. Serine 816 and serine 845 each carry phosphoserine. Over residues 833-845 (DEGEDGDEPDDGS) the composition is skewed to acidic residues. 2 TOG regions span residues 853-1081 (PRTE…VNMP) and 1193-1428 (IEQL…KRPS). HEAT repeat units follow at residues 855–893 (TEISDKITSELVSKIGDKNWKIRKEGLDEVAGIINDAKF), 936–974 (KQHVKNLGIPIITVLGDSKNNVRAAALATVNAWAEQTGM), and 1013–1051 (PTDLILCVPHLYSCLEDRNGDVRKKAQDALPFFMMHLGY). The segment at 1077-1160 (KVNMPAKPAP…KEDEDKSGPI (84 aa)) is disordered. HEAT repeat units follow at residues 1284–1322 (ENEASSFIPYLVVKVGEPKDVIRKDVRAILNRMCLVYPA), 1324–1357 (KMFPFIMEGTKSKNSKQRAECLEELGCLVESYGM), and 1361–1399 (QPTPGKALKEIAVHIGDRDNAVRNAALNTIVTVYNVHGD). The disordered stretch occupies residues 1422–1443 (RSAKRPSAAPIKQVEEKPQRAQ). At serine 1469 the chain carries Phosphoserine. Positions 1801–1822 (SMDQTGSKSDKETEKGASRIDE) are disordered. Residues 1808–1822 (KSDKETEKGASRIDE) are compositionally biased toward basic and acidic residues. Position 1861 is a phosphoserine (serine 1861). Residues 1932 to 1957 (PSVYLERLKILRQRCGLDNTKQDDRP) are interaction with TACC3. Residues 1949–2032 (DNTKQDDRPP…RLERIKSSRK (84 aa)) form a disordered region. A compositionally biased stretch (polar residues) spans 1971–1983 (VASSTDMLHSKLS). Positions 1984 to 1997 (QLRESREQHQHSDL) are enriched in basic and acidic residues. Residues 2002–2014 (THSSGTVTSSSST) show a composition bias toward low complexity. Over residues 2018–2032 (DDLKKRLERIKSSRK) the composition is skewed to basic and acidic residues.

It belongs to the TOG/XMAP215 family. Interacts with TACC1. Interacts with SLAIN2 and SLAIN1. Interacts with HNRNPA2B1. Interacts with TACC3 independently of clathrin. Interacts with TACC3 and clathrin forming the TACC3/ch-TOG/clathrin complex located at spindle inter-microtubules bridges. Interacts with NDC80; indicative for an association with the NDC80 complex. Overexpressed in hepatomas and colonic tumors. Also expressed in skeletal muscle, brain, heart, placenta, lung, liver, kidney and pancreas. Expression is elevated in the brain; highly expressed in the Purkinje cell bodies of the cerebellum.

Its subcellular location is the cytoplasm. The protein resides in the cytoskeleton. It localises to the microtubule organizing center. It is found in the centrosome. The protein localises to the spindle pole. Its subcellular location is the spindle. The protein resides in the chromosome. It localises to the centromere. It is found in the kinetochore. Binds to the plus end of microtubules and regulates microtubule dynamics and microtubule organization. Acts as a processive microtubule polymerase. Promotes cytoplasmic microtubule nucleation and elongation. Plays a major role in organizing spindle poles. In spindle formation protects kinetochore microtubules from depolymerization by KIF2C and has an essential role in centrosomal microtubule assembly independently of KIF2C activity. Contributes to centrosome integrity. Acts as a component of the TACC3/ch-TOG/clathrin complex proposed to contribute to stabilization of kinetochore fibers of the mitotic spindle by acting as inter-microtubule bridge. The TACC3/ch-TOG/clathrin complex is required for the maintenance of kinetochore fiber tension. Enhances the strength of NDC80 complex-mediated kinetochore-tip microtubule attachments. This Homo sapiens (Human) protein is Cytoskeleton-associated protein 5 (CKAP5).